The primary structure comprises 508 residues: Photosystem II CP47 reaction center protein (508 aa).

The next 6 helical transmembrane spans lie at 21–36, 101–115, 140–156, 203–218, 237–252, and 457–472; these read SVHIMHTALVAGWAGS, IVFSGLCFLAAIWHW, GIHLFLSGVACFGFGAF, IAAGTLGILAGLFHLS, VLSSSIAAVFFAAFVV, and SFALLFFFGHIWHGAR.

Belongs to the PsbB/PsbC family. PsbB subfamily. PSII is composed of 1 copy each of membrane proteins PsbA, PsbB, PsbC, PsbD, PsbE, PsbF, PsbH, PsbI, PsbJ, PsbK, PsbL, PsbM, PsbT, PsbX, PsbY, PsbZ, Psb30/Ycf12, at least 3 peripheral proteins of the oxygen-evolving complex and a large number of cofactors. It forms dimeric complexes. Requires Binds multiple chlorophylls. PSII binds additional chlorophylls, carotenoids and specific lipids. as cofactor.

It localises to the plastid. Its subcellular location is the chloroplast thylakoid membrane. Its function is as follows. One of the components of the core complex of photosystem II (PSII). It binds chlorophyll and helps catalyze the primary light-induced photochemical processes of PSII. PSII is a light-driven water:plastoquinone oxidoreductase, using light energy to abstract electrons from H(2)O, generating O(2) and a proton gradient subsequently used for ATP formation. This Gossypium hirsutum (Upland cotton) protein is Photosystem II CP47 reaction center protein.